Consider the following 107-residue polypeptide: Thioredoxin-1 (107 aa).

Residues 2 to 106 (ASVRTMNDYH…LTNMMAKLVK (105 aa)) enclose the Thioredoxin domain. Residues Cys-31 and Cys-34 each act as nucleophile in the active site. A disulfide bridge links Cys-31 with Cys-34.

This sequence belongs to the thioredoxin family. In terms of tissue distribution, ovary specific. Expressed present in the nurse cells from stage 9 of ovary development and is transported into the oocyte. Expressed throughout oogenesis.

It is found in the nucleus. Its function is as follows. Participates in various redox reactions through the reversible oxidation of its active center dithiol to a disulfide and catalyzes dithiol-disulfide exchange reactions. As a reducing substrate of peroxiredoxin 1, thioredoxin 2 is preferred over thioredoxin 1. Required for female meiosis and early embryonic development. The chain is Thioredoxin-1 (dhd) from Drosophila melanogaster (Fruit fly).